A 562-amino-acid polypeptide reads, in one-letter code: MIKFASFLKFRVQINGGRYWSSSPLRSVSNYVKFVFMDNAFKKYSIDTTDYQVGQDNVQKWGFDIHNPVFGISAGLVVFCLISLLLVEPVTARDALNGIKNGIIEQFDAFFMWSTNFFLLFAVGLLFSPLGKIRLGGKEATPDHSTVSWLSMLFAAGMGIGLLFWSVAEPTAYFTDWWGTPLNAEAYSADAKSLAMGATMFHWGVHGWSIYALVALALAFFAFNKGLPLSLRAAFYPIFGDRAWGWLGHVIDILAVLSTLFGLATSLGLGAQQATSGINHVFGLNGGIGTQMVVIAFVTFIAVLSVVRGIDGGVKLLSNVNMIVAFALLIFITFITFDTAMGSLVDTTMAYIQNIIPLSNPHGREDETWMHGWTVFYWAWWVSWSPFVGMFIARVSKGRTVREFLFAVIVIPTLVTLVWMSVFGGIALDQVVNKVGELGANGLTDISLTLFHVYDVLPYSSVISILSIVLILVFFITSSDSGSLVIDSITAGGKIDAPVPQRIFWACIEGSIAAVMLWVGGKEALQALQSGVVATGLPFTFVLLLMCVSLVKGLRTELSAYR.

A run of 12 helical transmembrane segments spans residues 68–88 (PVFG…LLVE), 110–130 (FFMW…FSPL), 147–167 (VSWL…FWSV), 203–223 (WGVH…FFAF), 243–263 (AWGW…LFGL), 287–307 (GIGT…LSVV), 322–342 (MIVA…TAMG), 373–393 (WTVF…MFIA), 404–424 (FLFA…SVFG), 456–476 (VLPY…VFFI), 503–523 (IFWA…GGKE), and 531–551 (GVVA…VSLV).

This sequence belongs to the BCCT transporter (TC 2.A.15) family.

It is found in the cell inner membrane. Functionally, involved in the uptake of osmoprotectants. Can transport glycine betaine, proline, choline and ectoine. The polypeptide is Glycine betaine/proline/choline/ectoine transporter VP1456 (Vibrio parahaemolyticus serotype O3:K6 (strain RIMD 2210633)).